The primary structure comprises 244 residues: uncharacterized protein (244 aa).

The 240-residue stretch at 5–244 (QLLLAHRGYS…ANKKFEIKIN (240 aa)) folds into the GP-PDE domain.

This sequence to glycerophosphoryl diester phosphodiesterases (EC 3.1.4.46). The protein to M.genitalium MG385.

This is an uncharacterized protein from Mycoplasma genitalium (strain ATCC 33530 / DSM 19775 / NCTC 10195 / G37) (Mycoplasmoides genitalium).